The primary structure comprises 331 residues: UPF0324 membrane protein SACOL0411 (331 aa).

The next 11 membrane-spanning stretches (helical) occupy residues 9–26 (FMIG…SFLA), 31–48 (ILDK…AILY), 69–88 (LLRF…DIIG), 93–115 (LLAI…NKLL), 122–144 (ALLL…APIF), 154–176 (SIGI…YAIF), 183–202 (YGAW…LAGG), 217–234 (LGRV…ILIM), 247–269 (ISIP…VTIP), 273–295 (LNIL…GLNV), and 308–330 (LMTI…HWLY).

This sequence belongs to the UPF0324 family.

Its subcellular location is the cell membrane. The polypeptide is UPF0324 membrane protein SACOL0411 (Staphylococcus aureus (strain COL)).